The sequence spans 209 residues: Molybdenum cofactor guanylyltransferase (209 aa).

GTP-binding positions include 13 to 15 (LAG), Lys-26, Asn-54, Asp-72, and Asp-107. Mg(2+) is bound at residue Asp-107.

This sequence belongs to the MobA family. As to quaternary structure, monomer. Mg(2+) is required as a cofactor.

It localises to the cytoplasm. It catalyses the reaction Mo-molybdopterin + GTP + H(+) = Mo-molybdopterin guanine dinucleotide + diphosphate. Its function is as follows. Transfers a GMP moiety from GTP to Mo-molybdopterin (Mo-MPT) cofactor (Moco or molybdenum cofactor) to form Mo-molybdopterin guanine dinucleotide (Mo-MGD) cofactor. The sequence is that of Molybdenum cofactor guanylyltransferase from Nitrobacter hamburgensis (strain DSM 10229 / NCIMB 13809 / X14).